A 529-amino-acid chain; its full sequence is BTB/POZ domain-containing protein 6 (529 aa).

Residues 127 to 197 enclose the BTB domain; sequence ADVHFIVGPA…LYSDEIDLEA (71 aa).

In terms of assembly, homodimer and heterodimer. Interacts with cul3 via the BTB domain.

The protein localises to the cytoplasm. Adapter protein for the cul3 E3 ubiquitin-protein ligase complex. Involved in late neuronal development and muscle formation. The polypeptide is BTB/POZ domain-containing protein 6 (btbd6) (Xenopus tropicalis (Western clawed frog)).